Reading from the N-terminus, the 223-residue chain is Phosphoribosylformylglycinamidine synthase subunit PurQ (223 aa).

A Glutamine amidotransferase type-1 domain is found at F4–K223. The Nucleophile role is filled by C85. Residues H196 and E198 contribute to the active site.

In terms of assembly, part of the FGAM synthase complex composed of 1 PurL, 1 PurQ and 2 PurS subunits.

It localises to the cytoplasm. It catalyses the reaction N(2)-formyl-N(1)-(5-phospho-beta-D-ribosyl)glycinamide + L-glutamine + ATP + H2O = 2-formamido-N(1)-(5-O-phospho-beta-D-ribosyl)acetamidine + L-glutamate + ADP + phosphate + H(+). The enzyme catalyses L-glutamine + H2O = L-glutamate + NH4(+). The protein operates within purine metabolism; IMP biosynthesis via de novo pathway; 5-amino-1-(5-phospho-D-ribosyl)imidazole from N(2)-formyl-N(1)-(5-phospho-D-ribosyl)glycinamide: step 1/2. Functionally, part of the phosphoribosylformylglycinamidine synthase complex involved in the purines biosynthetic pathway. Catalyzes the ATP-dependent conversion of formylglycinamide ribonucleotide (FGAR) and glutamine to yield formylglycinamidine ribonucleotide (FGAM) and glutamate. The FGAM synthase complex is composed of three subunits. PurQ produces an ammonia molecule by converting glutamine to glutamate. PurL transfers the ammonia molecule to FGAR to form FGAM in an ATP-dependent manner. PurS interacts with PurQ and PurL and is thought to assist in the transfer of the ammonia molecule from PurQ to PurL. The polypeptide is Phosphoribosylformylglycinamidine synthase subunit PurQ (Pyrococcus horikoshii (strain ATCC 700860 / DSM 12428 / JCM 9974 / NBRC 100139 / OT-3)).